The following is a 210-amino-acid chain: Translation initiation factor IF-3 (210 aa).

Positions Ala169–Val210 are disordered. Over residues Pro176–Glu186 the composition is skewed to basic and acidic residues. Residues Lys187–Val210 are compositionally biased toward low complexity.

It belongs to the IF-3 family. In terms of assembly, monomer.

The protein resides in the cytoplasm. IF-3 binds to the 30S ribosomal subunit and shifts the equilibrium between 70S ribosomes and their 50S and 30S subunits in favor of the free subunits, thus enhancing the availability of 30S subunits on which protein synthesis initiation begins. This is Translation initiation factor IF-3 from Deinococcus deserti (strain DSM 17065 / CIP 109153 / LMG 22923 / VCD115).